Here is a 299-residue protein sequence, read N- to C-terminus: Protoheme IX farnesyltransferase (299 aa).

Helical transmembrane passes span 25–45, 47–67, 95–115, 119–139, 147–167, 173–193, 218–238, 243–263, and 279–299; these read VVVL…RAGV, WTVL…AAAV, LAAL…LLTF, LAAW…TGFL, IVIG…AVSG, PLLL…ALAI, LHIL…YAIH, LYLL…WALY, and IRYL…PLTL.

This sequence belongs to the UbiA prenyltransferase family. Protoheme IX farnesyltransferase subfamily.

It localises to the cell inner membrane. It carries out the reaction heme b + (2E,6E)-farnesyl diphosphate + H2O = Fe(II)-heme o + diphosphate. Its pathway is porphyrin-containing compound metabolism; heme O biosynthesis; heme O from protoheme: step 1/1. Converts heme B (protoheme IX) to heme O by substitution of the vinyl group on carbon 2 of heme B porphyrin ring with a hydroxyethyl farnesyl side group. The chain is Protoheme IX farnesyltransferase from Azotobacter vinelandii (strain DJ / ATCC BAA-1303).